The sequence spans 930 residues: Translation initiation factor IF-2 (930 aa).

Positions 31–317 are disordered; that stretch reads FVKSASSTVE…RKSKRAKRAE (287 aa). Residues 61–78 show a composition bias toward low complexity; that stretch reads PAAGASNGAPAKPSAPGA. 2 stretches are compositionally biased toward pro residues: residues 79 to 99 and 108 to 120; these read RPGPRPGPPAPAQPKEPPAPA and PAAPAPPAAPPAP. Residues 121-135 show a composition bias toward low complexity; it reads AASAAPPSAPEAPSA. Pro residues-rich tracts occupy residues 136 to 158 and 178 to 192; these read RPTPGPRPGPGGPKPGAPKPAPR and PRPQGPAGPGGPRPG. The span at 193-205 shows a compositional bias: gly residues; the sequence is PGAGGPRPGGGPR. Positions 212–242 are enriched in pro residues; that stretch reads NMPPRPVGGPRPGGGPRPGGGPRPGAGPRPT. A compositionally biased stretch (gly residues) spans 244 to 301; the sequence is GGAGRPGGGGGGNYRGGGAGGGGGAGGAAAGGFRGRPGGGGGRPGQRGGAAGAFGRPG. The span at 305–314 shows a compositional bias: basic residues; it reads KRGRKSKRAK. The 173-residue stretch at 426 to 598 folds into the tr-type G domain; that stretch reads FRPPVVTVMG…VVLTADASLD (173 aa). Residues 435–442 form a G1 region; the sequence is GHVDHGKT. 435 to 442 contributes to the GTP binding site; it reads GHVDHGKT. The G2 stretch occupies residues 460–464; sequence GITQH. The G3 stretch occupies residues 485 to 488; the sequence is DTPG. Residues 485-489 and 539-542 contribute to the GTP site; these read DTPGH and NKID. The interval 539 to 542 is G4; the sequence is NKID. The segment at 575–577 is G5; sequence SAK.

The protein belongs to the TRAFAC class translation factor GTPase superfamily. Classic translation factor GTPase family. IF-2 subfamily.

It is found in the cytoplasm. In terms of biological role, one of the essential components for the initiation of protein synthesis. Protects formylmethionyl-tRNA from spontaneous hydrolysis and promotes its binding to the 30S ribosomal subunits. Also involved in the hydrolysis of GTP during the formation of the 70S ribosomal complex. The chain is Translation initiation factor IF-2 from Mycolicibacterium gilvum (strain PYR-GCK) (Mycobacterium gilvum (strain PYR-GCK)).